The following is a 159-amino-acid chain: Ribosomal RNA large subunit methyltransferase H (159 aa).

Residues leucine 76, glycine 107, and leucine 126–methionine 131 contribute to the S-adenosyl-L-methionine site.

Belongs to the RNA methyltransferase RlmH family. In terms of assembly, homodimer.

It localises to the cytoplasm. The enzyme catalyses pseudouridine(1915) in 23S rRNA + S-adenosyl-L-methionine = N(3)-methylpseudouridine(1915) in 23S rRNA + S-adenosyl-L-homocysteine + H(+). Specifically methylates the pseudouridine at position 1915 (m3Psi1915) in 23S rRNA. The polypeptide is Ribosomal RNA large subunit methyltransferase H (Acinetobacter baumannii (strain SDF)).